The chain runs to 1050 residues: Ankyrin repeat domain-containing protein 27 (1050 aa).

The interval 1–372 (MALYDEDLLK…RQGSLSAKPP (372 aa)) is sufficient for GEF activity towards RAB21. Residues 233–371 (ASEDAAFNKI…IRQGSLSAKP (139 aa)) form the VPS9 domain. 6 ANK repeats span residues 396 to 426 (SPTDCLFKHIASGNQKEVERLLSQEDHDKDT), 462 to 491 (RGHTPLHVAAVCGQASLIDLLVSKGAMVNA), 495 to 524 (HGATPLHLACQKGYQSVTLLLLHYKASAEV), 528 to 560 (NGNTPLHLACTYGHEDCVKALVYYDVESCRLDI), 564 to 593 (KGDTPLHIAARWGYQGVIETLLQNGASTEI), and 597 to 627 (LKETPLKCALNSKILSVMEAYHLSFERRQKS). Positions 396-460 (SPTDCLFKHI…PSVVTPFSRD (65 aa)) are sufficient for interaction with VPS29. Positions 451 to 600 (PSVVTPFSRD…TEIQNRLKET (150 aa)) are interaction with RAB38. The interval 451 to 730 (PSVVTPFSRD…APAQKRLAKV (280 aa)) is interaction with RAB32. A disordered region spans residues 625–665 (QKSSEAPVQSPQRSVDSISQESSTSSFSSMSASSRQEETKK). The span at 628-637 (SEAPVQSPQR) shows a compositional bias: polar residues. Low complexity predominate over residues 638–658 (SVDSISQESSTSSFSSMSASS). A required for interaction with VAMP7 region spans residues 658–707 (SRQEETKKDYREVEKLLRAVADGDLEMVRYLLEWTEEDLEDAEDTVSAAD). ANK repeat units follow at residues 668-698 (REVEKLLRAVADGDLEMVRYLLEWTEEDLED), 743-772 (DGSSPLHVAALHGRADLIPLLLKHGANAGA), 776-805 (DQAVPLHLACQQGHFQVVKCLLDSNAKPNK), 809-838 (SGNTPLIYACSGGHHELVALLLQHGASINA), and 842-871 (KGNTALHEAVIEKHVFVVELLLLHGASVQV). Residues 692–746 (TEEDLEDAEDTVSAADPEFCHPLCQCPKCAPAQKRLAKVPASGLGVNVTSQDGSS) form a sufficient for interaction with VPS29 region. A phosphoserine mark is found at serine 962 and serine 970. Positions 987 to 1050 (PAQSGSHAAE…TPQEVSASRS (64 aa)) are disordered. The segment covering 994–1004 (AAEKGNSDWPE) has biased composition (basic and acidic residues). Threonine 1023 is modified (phosphothreonine). Polar residues predominate over residues 1040 to 1050 (STPQEVSASRS).

In terms of assembly, interacts with RAB21 (GDP-bound form), VPS29, RAB32 (GTP-bound form), RAB38 (GTP-bound form), VAMP7, KIF5A, KIF5C, GOLGA4. Interacts with low affinity with RAB5. ANKRD27:RAB32 heterodimers can homodimerize to form tetramers. Can interact with RAB38 or RAB32, VPS29 and VAMP7 simultaneously. A decreased interaction with RAB32 seen in the presence of SGSM2.

The protein resides in the early endosome. It localises to the late endosome. Its subcellular location is the cytoplasmic vesicle membrane. It is found in the lysosome. The protein localises to the cell membrane. The protein resides in the melanosome. Functionally, may be a guanine exchange factor (GEF) for Rab21, Rab32 and Rab38 and regulate endosome dynamics. May regulate the participation of VAMP7 in membrane fusion events; in vitro inhibits VAMP7-mediated SNARE complex formation by trapping VAMP7 in a closed, fusogenically inactive conformation. Involved in peripheral melanosomal distribution of TYRP1 in melanocytes; the function, which probably is implicating vesicle-trafficking, includes cooperation with Rab32, Rab38 and VAMP7. Involved in the regulation of neurite growth; the function seems to require its GEF activity, probably towards Rab21, and VAMP7 but not Rab32/38. Proposed to be involved in Golgi sorting of VAMP7 and transport of VAMP7 vesicles to the cell surface; the function seems to implicate kinesin heavy chain isoform 5 proteins, GOLGA4, RAB21 and MACF1. Required for the colocalization of VAMP7 and Rab21, probably on TGN sites. Involved in GLUT1 endosome-to-plasma membrane trafficking; the function is dependent of association with VPS29. Regulates the proper trafficking of melanogenic enzymes TYR, TYRP1 and DCT/TYRP2 to melanosomes in melanocytes. The protein is Ankyrin repeat domain-containing protein 27 (ANKRD27) of Homo sapiens (Human).